A 238-amino-acid chain; its full sequence is Ubiquinone biosynthesis O-methyltransferase (238 aa).

Arg40, Gly59, Asp80, and Met125 together coordinate S-adenosyl-L-methionine.

It belongs to the methyltransferase superfamily. UbiG/COQ3 family.

The enzyme catalyses a 3-demethylubiquinol + S-adenosyl-L-methionine = a ubiquinol + S-adenosyl-L-homocysteine + H(+). It carries out the reaction a 3-(all-trans-polyprenyl)benzene-1,2-diol + S-adenosyl-L-methionine = a 2-methoxy-6-(all-trans-polyprenyl)phenol + S-adenosyl-L-homocysteine + H(+). The protein operates within cofactor biosynthesis; ubiquinone biosynthesis. In terms of biological role, O-methyltransferase that catalyzes the 2 O-methylation steps in the ubiquinone biosynthetic pathway. The protein is Ubiquinone biosynthesis O-methyltransferase of Paracidovorax citrulli (strain AAC00-1) (Acidovorax citrulli).